A 360-amino-acid chain; its full sequence is Fructose-bisphosphate aldolase 1 (360 aa).

S63 contacts D-glyceraldehyde 3-phosphate. Residue D110 is the Proton donor of the active site. Zn(2+) is bound by residues H111, D145, E175, and H227. A dihydroxyacetone phosphate-binding site is contributed by G228. H266 contributes to the Zn(2+) binding site. Residue 267 to 269 (GGS) coordinates dihydroxyacetone phosphate.

The protein belongs to the class II fructose-bisphosphate aldolase family. Homodimer. Zn(2+) serves as cofactor.

It catalyses the reaction beta-D-fructose 1,6-bisphosphate = D-glyceraldehyde 3-phosphate + dihydroxyacetone phosphate. Its pathway is carbohydrate degradation; glycolysis; D-glyceraldehyde 3-phosphate and glycerone phosphate from D-glucose: step 4/4. Its function is as follows. Catalyzes the aldol condensation of dihydroxyacetone phosphate (DHAP or glycerone-phosphate) with glyceraldehyde 3-phosphate (G3P) to form fructose 1,6-bisphosphate (FBP) in gluconeogenesis and the reverse reaction in glycolysis. The polypeptide is Fructose-bisphosphate aldolase 1 (FBA1) (Paracoccidioides lutzii (strain ATCC MYA-826 / Pb01) (Paracoccidioides brasiliensis)).